Consider the following 275-residue polypeptide: Voltage-dependent calcium channel gamma-5 subunit (275 aa).

4 helical membrane passes run 8–28 (ALTL…GIAV), 103–123 (FPLV…IGHI), 129–149 (ILAF…VVGL), and 181–201 (FAAI…YLFM).

This sequence belongs to the PMP-22/EMP/MP20 family. CACNG subfamily. As to quaternary structure, the L-type calcium channel is composed of five subunits: alpha-1, alpha-2/delta, beta and gamma. Acts as an auxiliary subunit for AMPA-selective glutamate receptors (AMPARs). Found in a complex with GRIA1, GRIA2, GRIA3, GRIA4, CNIH2, CNIH3, CACNG2, CACNG3, CACNG4, CACNG7 and CACNG8. Interacts with GRIA1, GRIA2, GRIA3 and GRIA4.

Its subcellular location is the membrane. It is found in the postsynaptic density membrane. Functionally, regulates the gating properties of AMPA-selective glutamate receptors (AMPARs). Modulates their gating properties by accelerating their rates of activation, deactivation and desensitization. Displays subunit-specific AMPA receptor regulation. Shows specificity for GRIA1, GRIA4 and the long isoform of GRIA2. According to PubMed:18817736, shows only specificity for GRIA2 and specifically to the form of GRIA2 for which a single amino acid in the pore region has been edited from a glutamine to an arginine residue. Thought to stabilize the calcium channel in an inactivated (closed) state. The sequence is that of Voltage-dependent calcium channel gamma-5 subunit (Cacng5) from Rattus norvegicus (Rat).